Reading from the N-terminus, the 297-residue chain is 2,3,4,5-tetrahydropyridine-2,6-dicarboxylate N-succinyltransferase (297 aa).

Mg(2+) is bound by residues aspartate 148 and glutamate 165. The active-site Acyl-anhydride intermediate is glutamate 181. Succinyl-CoA-binding positions include arginine 183, glycine 198, serine 201, alanine 224, 239 to 240, glycine 247, lysine 258, and 271 to 274; these read EA and RRDS.

The protein belongs to the type 2 tetrahydrodipicolinate N-succinyltransferase family. Homotrimer.

The protein resides in the cytoplasm. The enzyme catalyses (S)-2,3,4,5-tetrahydrodipicolinate + succinyl-CoA + H2O = (S)-2-succinylamino-6-oxoheptanedioate + CoA. It functions in the pathway amino-acid biosynthesis; L-lysine biosynthesis via DAP pathway; LL-2,6-diaminopimelate from (S)-tetrahydrodipicolinate (succinylase route): step 1/3. Catalyzes the conversion of the cyclic tetrahydrodipicolinate (THDP) into the acyclic N-succinyl-L-2-amino-6-oxopimelate using succinyl-CoA. The polypeptide is 2,3,4,5-tetrahydropyridine-2,6-dicarboxylate N-succinyltransferase (Corynebacterium glutamicum (strain ATCC 13032 / DSM 20300 / JCM 1318 / BCRC 11384 / CCUG 27702 / LMG 3730 / NBRC 12168 / NCIMB 10025 / NRRL B-2784 / 534)).